Here is a 230-residue protein sequence, read N- to C-terminus: DNA ADP-ribosyl transferase (230 aa).

The 205-residue stretch at 26–230 (WIVWHFTHAD…KYVIKPGMYY (205 aa)) folds into the DarT domain. Residues 30 to 32 (HFT), G39, L47, and R67 each bind NAD(+). The active-site Proton acceptor is R67. E183 is an active-site residue.

The protein belongs to the DarT ADP-ribosyltransferase family. Interacts with cognate antitoxin DarG (via C-terminus); this heterodimeric complex neutralizes the toxic effect of DarT by preventing ssDNA binding to DarT and consequently inactivating the toxin by direct protein-protein interactions.

It catalyses the reaction a thymidine in DNA + NAD(+) = an N-(ADP-alpha-D-ribosyl)-thymidine in DNA + nicotinamide + H(+). Toxic component of the hybrid type II/IV toxin-antitoxin (TA) system DarTG, which plays a crucial role in controlling bacterial growth and bacteriophage infection. ADP-ribosylates ssDNA, preferentially in the motif TTTW. In case of phage infection, DarT toxin ADP-ribosylates DNA, which inhibits both viral DNA and RNA synthesis and leads to abortive infection. Its toxic effect is neutralized by cognate antitoxin DarG. This chain is DNA ADP-ribosyl transferase, found in Mycobacterium bovis (strain BCG / Pasteur 1173P2).